The following is a 203-amino-acid chain: Translation initiation factor IF-3 (203 aa).

Residues 168-203 form a disordered region; that stretch reads QLSPKKKESATKKPATPKPATPAAVKAEKPAGDNEE. The span at 193–203 shows a compositional bias: basic and acidic residues; it reads KAEKPAGDNEE.

The protein belongs to the IF-3 family. As to quaternary structure, monomer.

Its subcellular location is the cytoplasm. Functionally, IF-3 binds to the 30S ribosomal subunit and shifts the equilibrium between 70S ribosomes and their 50S and 30S subunits in favor of the free subunits, thus enhancing the availability of 30S subunits on which protein synthesis initiation begins. The protein is Translation initiation factor IF-3 of Bacteroides fragilis (strain ATCC 25285 / DSM 2151 / CCUG 4856 / JCM 11019 / LMG 10263 / NCTC 9343 / Onslow / VPI 2553 / EN-2).